Here is a 133-residue protein sequence, read N- to C-terminus: Ribonuclease P protein component (133 aa).

Belongs to the RnpA family. In terms of assembly, consists of a catalytic RNA component (M1 or rnpB) and a protein subunit.

It catalyses the reaction Endonucleolytic cleavage of RNA, removing 5'-extranucleotides from tRNA precursor.. Functionally, RNaseP catalyzes the removal of the 5'-leader sequence from pre-tRNA to produce the mature 5'-terminus. It can also cleave other RNA substrates such as 4.5S RNA. The protein component plays an auxiliary but essential role in vivo by binding to the 5'-leader sequence and broadening the substrate specificity of the ribozyme. This chain is Ribonuclease P protein component, found in Corynebacterium efficiens (strain DSM 44549 / YS-314 / AJ 12310 / JCM 11189 / NBRC 100395).